Consider the following 106-residue polypeptide: Large ribosomal subunit protein uL24 (106 aa).

Belongs to the universal ribosomal protein uL24 family. In terms of assembly, part of the 50S ribosomal subunit.

Functionally, one of two assembly initiator proteins, it binds directly to the 5'-end of the 23S rRNA, where it nucleates assembly of the 50S subunit. In terms of biological role, one of the proteins that surrounds the polypeptide exit tunnel on the outside of the subunit. The protein is Large ribosomal subunit protein uL24 of Bordetella petrii (strain ATCC BAA-461 / DSM 12804 / CCUG 43448).